We begin with the raw amino-acid sequence, 284 residues long: Small ribosomal subunit protein uS5y/uS5u/uS5v (284 aa).

Positions 1 to 19 are enriched in basic and acidic residues; sequence MAERGGESGAERGGDRGDF. The segment at 1 to 51 is disordered; sequence MAERGGESGAERGGDRGDFGRGFGGGRGGGRGRDRGPRGRGRRGGRASEET. Over residues 20–29 the composition is skewed to gly residues; sequence GRGFGGGRGG. Residues 95-158 form the S5 DRBM domain; the sequence is LKDEVMKIMP…ILAKLSVVPV (64 aa).

It belongs to the universal ribosomal protein uS5 family.

This is Small ribosomal subunit protein uS5y/uS5u/uS5v (RPS2B) from Arabidopsis thaliana (Mouse-ear cress).